Reading from the N-terminus, the 433-residue chain is 3-deoxy-D-manno-octulosonic acid transferase (433 aa).

The chain crosses the membrane as a helical; Signal-anchor span at residues 11–31 (TFLYDCFLIFAFMVGLPRILY). Glu70 acts as the Proton acceptor in catalysis. Residues 277 to 278 (PR), 317 to 319 (IGW), and 344 to 347 (NLLE) contribute to the CMP site.

Belongs to the glycosyltransferase group 1 family. Glycosyltransferase 30 subfamily.

The protein localises to the cell inner membrane. The catalysed reaction is lipid IVA (E. coli) + CMP-3-deoxy-beta-D-manno-octulosonate = alpha-Kdo-(2-&gt;6)-lipid IVA (E. coli) + CMP + H(+). The enzyme catalyses alpha-Kdo-(2-&gt;6)-lipid IVA (E. coli) + CMP-3-deoxy-beta-D-manno-octulosonate = alpha-Kdo-(2-&gt;4)-alpha-Kdo-(2-&gt;6)-lipid IVA (E. coli) + CMP + H(+). It carries out the reaction alpha-Kdo-(2-&gt;4)-alpha-Kdo-(2-&gt;6)-lipid IVA (E. coli) + CMP-3-deoxy-beta-D-manno-octulosonate = alpha-Kdo-(2-&gt;8)-alpha-Kdo-(2-&gt;4)-alpha-Kdo-(2-&gt;6)-lipid IVA (E. coli) + CMP + H(+). It catalyses the reaction alpha-Kdo-(2-&gt;8)-alpha-Kdo-(2-&gt;4)-alpha-Kdo-(2-&gt;6)-lipid IVA (E. coli) + CMP-3-deoxy-beta-D-manno-octulosonate = alpha-Kdo-(2-&gt;8)-[alpha-Kdo-(2-&gt;4)]-alpha-Kdo-(2-&gt;4)-alpha-Kdo-(2-&gt;6)-lipid IVA + CMP + H(+). It functions in the pathway bacterial outer membrane biogenesis; LPS core biosynthesis. Its function is as follows. Involved in lipopolysaccharide (LPS) biosynthesis. Catalyzes the transfer of predominantly four 3-deoxy-D-manno-octulosonate (Kdo) residues from CMP-Kdo to lipid IV(A), the tetraacyldisaccharide-1,4'-bisphosphate precursor of lipid A. Thus generates the genus-specific LPS epitope of Chlamydia, composed of the trisaccharide alpha-Kdo-(2-&gt;8)-alpha-Kdo-(2-&gt;4)-alpha-Kdo. In Chlamydophila psittaci (strain ATCC VR-125 / 6BC) (Chlamydia psittaci), this protein is 3-deoxy-D-manno-octulosonic acid transferase (waaA).